The primary structure comprises 349 residues: MATSAISKLLVSDFASSVHIPSNYVRPISDRPNLSEVESSGDSIPLIDLRDLHGPNRAVIVQQLASACSTYGFFQIKNHGVPDTTVNKMQTVAREFFHQPESERVKHYSADPTKTTRLSTSFNVGADKVLNWRDFLRLHCFPIEDFIEEWPSSPISFREVTAEYATSVRALVLRLLEAISESLGLESDHISNILGKHAQHMAFNYYPPCPEPELTYGLPGHKDPTVITVLLQDQVSGLQVFKDDKWVAVSPIPNTFIVNIGDQMQVISNDKYKSVLHRAVVNTENERLSIPTFYFPSTDAVIGPAHELVNEQDSLAIYRTYPFVEYWDKFWNRSLATASCLDAFKAPTT.

One can recognise a Fe2OG dioxygenase domain in the interval 197 to 296 (HAQHMAFNYY…RLSIPTFYFP (100 aa)). Tyr206 serves as a coordination point for 2-oxoglutarate. Positions 221, 223, and 277 each coordinate Fe cation. 2 residues coordinate 2-oxoglutarate: Arg287 and Ser289.

This sequence belongs to the iron/ascorbate-dependent oxidoreductase family. It depends on L-ascorbate as a cofactor. Requires Fe(2+) as cofactor.

The enzyme catalyses salicylate + NADH + O2 + H(+) = 2,3-dihydroxybenzoate + NAD(+) + H2O. In terms of biological role, converts salicylic acid (SA) to both 2,3-dihydroxybenzoic acid (2,3-DHBA) and 2,5-DHBA in vitro but only 2,3-DHBA in vivo. Component of a negative feedback regulation system of SA levels during senescence. Regulates both onset and progression of leaf senescence. Negative regulator of defense against Hyaloperonospora arabidopsidis. Functionally, (Microbial infection) Confers susceptibility to the downy mildew pathogen Hyaloperonospora arabidopsidis. The chain is Protein DMR6-LIKE OXYGENASE 1 from Arabidopsis thaliana (Mouse-ear cress).